The primary structure comprises 412 residues: Serine hydroxymethyltransferase (412 aa).

Residues leucine 117 and 121-123 contribute to the (6S)-5,6,7,8-tetrahydrofolate site; that span reads GHL. Lysine 226 carries the N6-(pyridoxal phosphate)lysine modification.

The protein belongs to the SHMT family. Homodimer. It depends on pyridoxal 5'-phosphate as a cofactor.

It localises to the cytoplasm. The catalysed reaction is (6R)-5,10-methylene-5,6,7,8-tetrahydrofolate + glycine + H2O = (6S)-5,6,7,8-tetrahydrofolate + L-serine. The protein operates within one-carbon metabolism; tetrahydrofolate interconversion. It functions in the pathway amino-acid biosynthesis; glycine biosynthesis; glycine from L-serine: step 1/1. Functionally, catalyzes the reversible interconversion of serine and glycine with tetrahydrofolate (THF) serving as the one-carbon carrier. This reaction serves as the major source of one-carbon groups required for the biosynthesis of purines, thymidylate, methionine, and other important biomolecules. Also exhibits THF-independent aldolase activity toward beta-hydroxyamino acids, producing glycine and aldehydes, via a retro-aldol mechanism. The chain is Serine hydroxymethyltransferase from Staphylococcus haemolyticus (strain JCSC1435).